We begin with the raw amino-acid sequence, 200 residues long: Adenine phosphoribosyltransferase (200 aa).

This sequence belongs to the purine/pyrimidine phosphoribosyltransferase family. Homodimer.

The protein localises to the cytoplasm. It catalyses the reaction AMP + diphosphate = 5-phospho-alpha-D-ribose 1-diphosphate + adenine. It participates in purine metabolism; AMP biosynthesis via salvage pathway; AMP from adenine: step 1/1. Catalyzes a salvage reaction resulting in the formation of AMP, that is energically less costly than de novo synthesis. The sequence is that of Adenine phosphoribosyltransferase from Sorangium cellulosum (strain So ce56) (Polyangium cellulosum (strain So ce56)).